Reading from the N-terminus, the 405-residue chain is Exodeoxyribonuclease 7 large subunit (405 aa).

This sequence belongs to the XseA family. In terms of assembly, heterooligomer composed of large and small subunits.

The protein resides in the cytoplasm. It catalyses the reaction Exonucleolytic cleavage in either 5'- to 3'- or 3'- to 5'-direction to yield nucleoside 5'-phosphates.. Its function is as follows. Bidirectionally degrades single-stranded DNA into large acid-insoluble oligonucleotides, which are then degraded further into small acid-soluble oligonucleotides. The chain is Exodeoxyribonuclease 7 large subunit from Syntrophomonas wolfei subsp. wolfei (strain DSM 2245B / Goettingen).